The primary structure comprises 929 residues: Facilitated trehalose transporter Tret1 (929 aa).

Residues 1 to 275 form a disordered region; that stretch reads MSGRDNRAAG…VGYQQQKATS (275 aa). At 1-462 the chain is on the cytoplasmic side; it reads MSGRDNRAAG…LEVYRPTTNP (462 aa). Residues 10–26 show a composition bias toward gly residues; the sequence is GAGGGSGGGGGGGGGGG. Positions 41–59 are enriched in basic and acidic residues; sequence KLKEKLTRAGEELGYHRVE. The span at 60 to 72 shows a compositional bias: polar residues; it reads SNLSASNTATSLD. Low complexity-rich tracts occupy residues 85–141, 168–178, and 237–254; these read AAPQ…QPLR, QEIQQQQLQQQ, and SNSNNNSKNNSKTTVAAD. Ser320, Ser321, and Ser322 each carry phosphoserine. The disordered stretch occupies residues 352 to 371; it reads VLHGSSTDSDEEGEDAEHKR. 2 positions are modified to phosphoserine: Ser392 and Ser394. A disordered region spans residues 398 to 420; that stretch reads FLSSRQNFQQQRSISTDSRKSRR. Residues 402-413 show a composition bias toward polar residues; the sequence is RQNFQQQRSIST. A helical transmembrane segment spans residues 463–483; that stretch reads IYIWTQVLAALSVSLGSLVVG. The Extracellular segment spans residues 484 to 512; the sequence is FSSAYTSPALVSMTDRNLTSFDVSTEDAS. Asn500 carries an N-linked (GlcNAc...) asparagine glycan. A helical transmembrane segment spans residues 513 to 533; that stretch reads WVGGIMPLAGLAGGIAGGPLI. Topologically, residues 534-541 are cytoplasmic; it reads EYLGRRNT. A helical transmembrane segment spans residues 542-562; that stretch reads ILATAVPFIISWLLIACAVNV. The Extracellular segment spans residues 563–569; it reads PMVLSGR. A helical transmembrane segment spans residues 570-590; the sequence is FLAGFCVGIASLSLPVYLGET. The Cytoplasmic segment spans residues 591-596; sequence VQPEVR. Residues 597–617 form a helical membrane-spanning segment; that stretch reads GTLGLLPTAFGNIGILLCFIA. The Extracellular segment spans residues 618–624; sequence GTYMDWS. Residues 625-645 form a helical membrane-spanning segment; it reads MLAFLGGALPVPFLILMFLIP. Over 646-708 the chain is Cytoplasmic; the sequence is ETPRWYVSRG…ELLKRSNLKP (63 aa). Residues 709 to 729 traverse the membrane as a helical segment; the sequence is LSISLGLMFFQQLSGINAVIF. The Extracellular portion of the chain corresponds to 730–745; the sequence is YTVQIFKDAGSTLDGN. A helical membrane pass occupies residues 746–766; it reads VCTIIVGTVNFIATFIGILLI. The Cytoplasmic segment spans residues 767 to 772; it reads DRAGRK. A helical transmembrane segment spans residues 773 to 793; that stretch reads ILLYVSNIAMILTLFVLGGFF. Residues 794–804 are Extracellular-facing; it reads YCKANGMDVSN. Residues 805–825 form a helical membrane-spanning segment; the sequence is VGLLPLCCFVVYILGFSLGFG. At 826–839 the chain is on the cytoplasmic side; that stretch reads PIPWLMMGEILPAK. A helical transmembrane segment spans residues 840–860; sequence IRGSAASVATAFNWTCTFVVT. Over 861-873 the chain is Extracellular; sequence KSFLDMIKLIGAH. Residues 874 to 894 traverse the membrane as a helical segment; sequence GAFWLFGVICCIGMFFVIFCV. At 895–929 the chain is on the cytoplasmic side; it reads PETQGKTLEDIERKMMGRVRRMSSVANIKPLSFNM. Phosphoserine occurs at positions 917 and 918.

Belongs to the major facilitator superfamily. Sugar transporter (TC 2.A.1.1) family. Trehalose transporter subfamily.

Its subcellular location is the cell membrane. Low-capacity facilitative transporter for trehalose. Does not transport maltose, sucrose or lactose. Mediates the bidirectional transfer of trehalose. Responsible for the transport of trehalose synthesized in the fat body and the incorporation of trehalose into other tissues that require a carbon source, thereby regulating trehalose levels in the hemolymph. This is Facilitated trehalose transporter Tret1 from Drosophila grimshawi (Hawaiian fruit fly).